Reading from the N-terminus, the 378-residue chain is Lipid-A-disaccharide synthase (378 aa).

Belongs to the LpxB family.

It carries out the reaction a lipid X + a UDP-2-N,3-O-bis[(3R)-3-hydroxyacyl]-alpha-D-glucosamine = a lipid A disaccharide + UDP + H(+). It participates in bacterial outer membrane biogenesis; LPS lipid A biosynthesis. Its function is as follows. Condensation of UDP-2,3-diacylglucosamine and 2,3-diacylglucosamine-1-phosphate to form lipid A disaccharide, a precursor of lipid A, a phosphorylated glycolipid that anchors the lipopolysaccharide to the outer membrane of the cell. This is Lipid-A-disaccharide synthase from Pseudomonas aeruginosa (strain UCBPP-PA14).